The following is a 174-amino-acid chain: RNA polymerase sigma factor CarQ (174 aa).

The Polymerase core binding signature appears at 39–52 (DLLQATFLSVIRSR). The disordered stretch occupies residues 86-106 (YASREDTATPASAAPDDSDPS). Residues 136–155 (FEEIGALRGISPGAARLRAH) constitute a DNA-binding region (H-T-H motif).

This sequence belongs to the sigma-70 factor family. ECF subfamily.

Functionally, sigma factors are initiation factors that promote the attachment of RNA polymerase to specific initiation sites and are then released. This sigma factor regulates genes for the light induced biosynthesis of carotenoids. This is RNA polymerase sigma factor CarQ (carQ) from Myxococcus xanthus.